Consider the following 190-residue polypeptide: T-cell receptor gamma chain C region 5/10-13 (190 aa).

The interval 1 to 157 (DKRTDSDFSP…LQVTTTYAFY (157 aa)) is c region. A helical transmembrane segment spans residues 158–178 (TYLILFFKSMVHLAFVVFCLF). The Cytoplasmic portion of the chain corresponds to 179–190 (RRAAMSCDDQRS).

It is found in the membrane. The chain is T-cell receptor gamma chain C region 5/10-13 from Mus musculus (Mouse).